The primary structure comprises 271 residues: ATP synthase subunit a (271 aa).

Helical transmembrane passes span 31–51 (WDTI…GLYM), 89–109 (FVAP…WIGV), 124–144 (DINL…IVSL), 186–206 (IFSG…VLWL), and 216–236 (LGVG…YYAF). Residues 247-271 (DEHADGGDSSSRQASPTPLPAGQVR) form a disordered region.

Belongs to the ATPase A chain family. In terms of assembly, F-type ATPases have 2 components, CF(1) - the catalytic core - and CF(0) - the membrane proton channel. CF(1) has five subunits: alpha(3), beta(3), gamma(1), delta(1), epsilon(1). CF(0) has three main subunits: a(1), b(2) and c(9-12). The alpha and beta chains form an alternating ring which encloses part of the gamma chain. CF(1) is attached to CF(0) by a central stalk formed by the gamma and epsilon chains, while a peripheral stalk is formed by the delta and b chains.

It localises to the cell membrane. In terms of biological role, key component of the proton channel; it plays a direct role in the translocation of protons across the membrane. The polypeptide is ATP synthase subunit a (Acidothermus cellulolyticus (strain ATCC 43068 / DSM 8971 / 11B)).